The following is a 623-amino-acid chain: Glutathione import ATP-binding protein GsiA (623 aa).

ABC transporter domains lie at 15–269 (VENL…RALL) and 314–564 (LRVR…RKLL). Residues 49 to 56 (GESGSGKS) and 357 to 364 (GESGSGKS) each bind ATP.

Belongs to the ABC transporter superfamily. Glutathione importer (TC 3.A.1.5.11) family. As to quaternary structure, the complex is composed of two ATP-binding proteins (GsiA), two transmembrane proteins (GsiC and GsiD) and a solute-binding protein (GsiB).

The protein resides in the cell inner membrane. The enzyme catalyses glutathione(out) + ATP + H2O = glutathione(in) + ADP + phosphate + H(+). Its function is as follows. Part of the ABC transporter complex GsiABCD involved in glutathione import. Responsible for energy coupling to the transport system. The sequence is that of Glutathione import ATP-binding protein GsiA from Escherichia coli O6:H1 (strain CFT073 / ATCC 700928 / UPEC).